Reading from the N-terminus, the 447-residue chain is Serine/threonine-protein phosphatase 2A 55 kDa regulatory subunit B delta isoform (447 aa).

WD repeat units follow at residues 26–65 (AEADIISTVEFNCSGDLLATGDKGGRVVIFQREQENKSRP), 91–132 (EIEE…KRVE), 175–213 (AHTYHINSISVNSDHETYLSADDLRINLWHLEITDRSFN), 224–264 (ELTE…LCDR), 283–321 (EIISSISDVKFSNSGRYMMTRDYLSVKVWDLNMESRPVE), 338–379 (ENDC…DITL), and 414–447 (DFNKKILHTAWHPTDNIIAVAATNNLYIFQDKVN).

Belongs to the phosphatase 2A regulatory subunit B family. As to quaternary structure, PP2A consists of a common heterodimeric core enzyme, composed of a 36 kDa catalytic subunit (subunit C) and a 65 kDa constant regulatory subunit (PR65 or subunit A), that associates with a variety of regulatory subunits. Proteins that associate with the core dimer include three families of regulatory subunits B (the R2/B/PR55/B55, R3/B''/PR72/PR130/PR59 and R5/B'/B56 families), the 48 kDa variable regulatory subunit, viral proteins, and cell signaling molecules. Interacts with ensa (when phosphorylated at 'Ser-67') and arpp19 (when phosphorylated at 'Ser-67'), leading to inhibit PP2A activity.

The protein resides in the cytoplasm. Substrate-recognition subunit of protein phosphatase 2A (PP2A) that plays a key role in cell cycle by controlling mitosis entry and exit. The activity of PP2A complexes containing ppp2r2d (PR55-delta) fluctuate during the cell cycle: the activity is high in interphase and low in mitosis. During mitosis, activity of PP2A is inhibited via interaction with phosphorylated ensa and arpp19 inhibitors. PP2A complexes containing ppp2r2d (PR55-delta) also regulate the activity of TGF-beta/Activin/Nodal signaling by restricting receptor activity. Within the PP2A complexes, the B regulatory subunits modulate substrate selectivity and catalytic activity, and may also direct the localization of the catalytic enzyme to a particular subcellular compartment. The polypeptide is Serine/threonine-protein phosphatase 2A 55 kDa regulatory subunit B delta isoform (ppp2r2d) (Xenopus tropicalis (Western clawed frog)).